A 99-amino-acid polypeptide reads, in one-letter code: RNA-binding protein Hfq (99 aa).

The Sm domain occupies 9–68; sequence DPFLNALRRERVPVSIYLVNGIKLQGQIESFDQFVILLKNTVSQMVYKHAISTVVPSRPV. Residues 64–99 form a disordered region; that stretch reads PSRPVSHHSNNPGGGSNYHGNNTAASQQSQEADDAE.

The protein belongs to the Hfq family. As to quaternary structure, homohexamer.

RNA chaperone that binds small regulatory RNA (sRNAs) and mRNAs to facilitate mRNA translational regulation in response to envelope stress, environmental stress and changes in metabolite concentrations. Also binds with high specificity to tRNAs. The protein is RNA-binding protein Hfq of Pectobacterium carotovorum subsp. carotovorum (strain PC1).